Here is a 646-residue protein sequence, read N- to C-terminus: Esterase EstA (646 aa).

The signal sequence occupies residues 1 to 24; the sequence is MIRMALKPLVAACLLASLSTAPQA. At 25–397 the chain is on the extracellular side; that stretch reads APSPYSTLVV…DSAASGDGNG (373 aa). Residue Ser-38 is the Nucleophile of the active site. Residues Asp-310 and His-313 contribute to the active site. The Autotransporter domain occupies 366–646; it reads QNVGQWRGFV…SVSLALSLDF (281 aa). A beta stranded membrane pass occupies residues 398–408; it reads YNLTLGGSYRI. Residues 409–410 lie on the Periplasmic side of the membrane; that stretch reads DE. The chain crosses the membrane as a beta stranded span at residues 411–421; it reads AWRAGVAAGFY. The Extracellular portion of the chain corresponds to 422–437; it reads RQKLEAGAKDSDYRMN. Residues 438-447 form a beta stranded membrane-spanning segment; it reads SYMASAFVQY. Residues 448 to 451 lie on the Periplasmic side of the membrane; the sequence is QENR. Residues 452-461 form a beta stranded membrane-spanning segment; that stretch reads WWADAALTGG. The Extracellular segment spans residues 462 to 488; that stretch reads YLDYDDLKRKFALGGGERSEKGDTNGH. The chain crosses the membrane as a beta stranded span at residues 489-500; sequence LWAFSARLGYDI. Residues 501 to 507 lie on the Periplasmic side of the membrane; sequence AQQADSP. Residues 508–518 form a beta stranded membrane-spanning segment; sequence WHLSPFVSADY. Residues 519 to 547 lie on the Extracellular side of the membrane; the sequence is ARVEVDGYSEKGASATALDYDDQKRSSKR. The beta stranded transmembrane segment at 548–558 threads the bilayer; that stretch reads LGAGLQGKYAF. Residues 559-561 lie on the Periplasmic side of the membrane; the sequence is GSD. A beta stranded transmembrane segment spans residues 562-571; it reads TQLFAEYAHE. Residues 572-605 lie on the Extracellular side of the membrane; it reads REYEDDTQDLTMSLNSLPGNRFTLEGYTPQDHLN. A beta stranded membrane pass occupies residues 606–615; that stretch reads RVSLGFSQKL. Residues 616-618 lie on the Periplasmic side of the membrane; that stretch reads APE. The beta stranded transmembrane segment at 619-628 threads the bilayer; sequence LSLRGGYNWR. Topologically, residues 629-636 are extracellular; it reads KGEDDTQQ. A beta stranded transmembrane segment spans residues 637-646; sequence SVSLALSLDF.

Belongs to the 'GDSL' lipolytic enzyme family.

It is found in the cell outer membrane. The catalysed reaction is a carboxylic ester + H2O = an alcohol + a carboxylate + H(+). Functionally, esterase whose enzymatic activity is required for rhamnolipid production, all kinds of cell motility (swimming, swarming, and twitching), and biofilm formation; the exact role of EstA in these processes is unclear. In vitro, has pronounced esterase activities towards p-nitrophenyl esters of short acyl chain length (C4-C6) and Tween detergents. Also shows relatively high activity towards beta-naphthyl butyrate, whereas its activities towards triacylglycerols and acyls-CoA are negligible. The sequence is that of Esterase EstA (estA) from Pseudomonas aeruginosa (strain ATCC 15692 / DSM 22644 / CIP 104116 / JCM 14847 / LMG 12228 / 1C / PRS 101 / PAO1).